A 156-amino-acid polypeptide reads, in one-letter code: Small ribosomal subunit protein uS7 (156 aa).

It belongs to the universal ribosomal protein uS7 family. As to quaternary structure, part of the 30S ribosomal subunit. Contacts proteins S9 and S11.

Its function is as follows. One of the primary rRNA binding proteins, it binds directly to 16S rRNA where it nucleates assembly of the head domain of the 30S subunit. Is located at the subunit interface close to the decoding center, probably blocks exit of the E-site tRNA. The sequence is that of Small ribosomal subunit protein uS7 from Chromobacterium violaceum (strain ATCC 12472 / DSM 30191 / JCM 1249 / CCUG 213 / NBRC 12614 / NCIMB 9131 / NCTC 9757 / MK).